A 732-amino-acid chain; its full sequence is MERQVLLSEPQEAAALYRGLSRQPSLSAACLGPEVTTQYGGLYRTVHTEWTQRDLDRMENIRFCRQYLVFHDGDSVVFAGPAGNSVETRGELLSRESPSGTMKAVLRKAGGAVSGEEKQFLEVWEKNRKLKSFNLSALEKHGPVYEDDCFGCLSWSHSETHLLYVAEKKRPKAESFFQTKALDVSASDEEMARPKKPDQAIKGDQFVFYEDWGETMVSKSIPVLCVLDIESGNISVLEGVPENVSPGQAFWAPGDTGVVFVGWWHEPFRLGIRYCTNRRSALYYVDLSGGKCELLSDESLAVCSPRLSPDQCRVVYLQYPSLAPHHQCSQLFLYDWYTKVTSLVVDIVPRQLGESFSGIYCSLLPLGCWSADSQRVVFDSVQRSRQDLFAVDTQTGSVTSLTAGGSAGSWKLLTIDRDLMVAQFSTPNLPPSLKVGFLPPAGKEQSVSWVSLEEAEPIPDIHWGIRVLHPPPDQENVQYADLDFEAILLQPSNSPDKSQVPMVVMPHGGPHSSFVTAWMLFPAMLCKMGFAVLLVNYRGSTGFGQDSILSLPGNVGHQDVKDVQFAVQQVLQEEHFDARRVALMGGSHGGFLSCHLIGQYPETYSACIARNPVINIVSMMGTTDIPDWCMVETGFPYSNDYLPDLNVLEEMLDKSPIKYIPQVKTPVLLMLGQEDRRVPFKQGLEYYHALKARNVPVRLLLYPKSTHALSEVEVESDSFMNTVLWLHTHLGS.

Met-1 carries the post-translational modification N-acetylmethionine. A phosphoserine mark is found at Ser-185 and Ser-187. Catalysis depends on charge relay system residues Ser-587, Asp-675, and His-707.

This sequence belongs to the peptidase S9C family. As to quaternary structure, homotetramer.

The protein resides in the cytoplasm. The catalysed reaction is Cleavage of an N-acetyl or N-formyl amino acid from the N-terminus of a polypeptide.. Homotetramerization is required for activity. Tetramerization results in the formation of a gated channel which is involved in substrate selection and substrate access to the catalytic sites. In terms of biological role, this enzyme catalyzes the hydrolysis of the N-terminal peptide bond of an N-acetylated peptide to generate an N-acetylated amino acid and a peptide with a free N-terminus. It preferentially cleaves off Ac-Ala, Ac-Met and Ac-Ser. Also, involved in the degradation of oxidized and glycated proteins. This Mus musculus (Mouse) protein is Acylamino-acid-releasing enzyme (Apeh).